A 597-amino-acid chain; its full sequence is Elongation factor 4 (597 aa).

A tr-type G domain is found at 2 to 184 (KNIRNFSIIA…TVVQKIPAPK (183 aa)). Residues 14–19 (DHGKST) and 131–134 (NKID) contribute to the GTP site.

Belongs to the TRAFAC class translation factor GTPase superfamily. Classic translation factor GTPase family. LepA subfamily.

It localises to the cell inner membrane. It catalyses the reaction GTP + H2O = GDP + phosphate + H(+). Its function is as follows. Required for accurate and efficient protein synthesis under certain stress conditions. May act as a fidelity factor of the translation reaction, by catalyzing a one-codon backward translocation of tRNAs on improperly translocated ribosomes. Back-translocation proceeds from a post-translocation (POST) complex to a pre-translocation (PRE) complex, thus giving elongation factor G a second chance to translocate the tRNAs correctly. Binds to ribosomes in a GTP-dependent manner. The polypeptide is Elongation factor 4 (Laribacter hongkongensis (strain HLHK9)).